The chain runs to 67 residues: Kappa-conotoxin-like 1 (67 aa).

A signal peptide spans 1–26 (MMFRLTSVSCFLLVIACLNLFQVVLT). 4 disulfide bridges follow: C29–C43, C36–C48, C42–C51, and C47–C55. Isoleucine amide is present on I59. A propeptide spanning residues 63 to 67 (ATFQE) is cleaved from the precursor.

This sequence belongs to the conotoxin I2 superfamily. As to expression, expressed by the venom duct.

The protein localises to the secreted. Inhibits the vertebrate voltage-gated potassium channels Kv1.1/KCNA1 and Kv1.3/KCNA3. In Conus vexillum (Flag cone), this protein is Kappa-conotoxin-like 1.